The following is a 290-amino-acid chain: Tubulin beta-4B chain (290 aa).

Residues M1–I4 carry the MREI motif motif. Q11 contributes to the GTP binding site. Residue T55 is modified to Phosphothreonine. An N6-acetyllysine modification is found at K58. 6 residues coordinate GTP: E69, S138, G142, T143, G144, and N172. Mg(2+) is bound at residue E69.

The protein belongs to the tubulin family. In terms of assembly, dimer of alpha and beta chains. A typical microtubule is a hollow water-filled tube with an outer diameter of 25 nm and an inner diameter of 15 nM. Alpha-beta heterodimers associate head-to-tail to form protofilaments running lengthwise along the microtubule wall with the beta-tubulin subunit facing the microtubule plus end conferring a structural polarity. Microtubules usually have 13 protofilaments but different protofilament numbers can be found in some organisms and specialized cells. Component of sperm flagellar doublet microtubules. Mg(2+) serves as cofactor. Post-translationally, some glutamate residues at the C-terminus are polyglycylated, resulting in polyglycine chains on the gamma-carboxyl group. Glycylation is mainly limited to tubulin incorporated into axonemes (cilia and flagella) whereas glutamylation is prevalent in neuronal cells, centrioles, axonemes, and the mitotic spindle. Both modifications can coexist on the same protein on adjacent residues, and lowering polyglycylation levels increases polyglutamylation, and reciprocally. Cilia and flagella glycylation is required for their stability and maintenance. Flagella glycylation controls sperm motility. Some glutamate residues at the C-terminus are polyglutamylated, resulting in polyglutamate chains on the gamma-carboxyl group. Polyglutamylation plays a key role in microtubule severing by spastin (SPAST). SPAST preferentially recognizes and acts on microtubules decorated with short polyglutamate tails: severing activity by SPAST increases as the number of glutamates per tubulin rises from one to eight, but decreases beyond this glutamylation threshold. Glutamylation is also involved in cilia motility.

The protein resides in the cytoplasm. Its subcellular location is the cytoskeleton. It localises to the flagellum axoneme. In terms of biological role, tubulin is the major constituent of microtubules, a cylinder consisting of laterally associated linear protofilaments composed of alpha- and beta-tubulin heterodimers. Microtubules grow by the addition of GTP-tubulin dimers to the microtubule end, where a stabilizing cap forms. Below the cap, tubulin dimers are in GDP-bound state, owing to GTPase activity of alpha-tubulin. The sequence is that of Tubulin beta-4B chain (TUBB4B) from Mesocricetus auratus (Golden hamster).